Here is a 510-residue protein sequence, read N- to C-terminus: Inositol-3-phosphate synthase (510 aa).

NAD(+)-binding residues include glycine 70, glycine 71, asparagine 72, asparagine 73, aspartate 143, isoleucine 180, glutamine 190, arginine 193, threonine 230, alanine 231, asparagine 232, threonine 233, glycine 281, serine 282, aspartate 306, serine 309, asparagine 340, asparagine 341, aspartate 342, lysine 355, glycine 393, aspartate 394, aspartate 422, and serine 423.

Belongs to the myo-inositol 1-phosphate synthase family. NAD(+) is required as a cofactor.

It localises to the cytoplasm. Its subcellular location is the cytosol. The protein localises to the nucleus. It carries out the reaction D-glucose 6-phosphate = 1D-myo-inositol 3-phosphate. The protein operates within polyol metabolism; myo-inositol biosynthesis; myo-inositol from D-glucose 6-phosphate: step 1/2. Key enzyme in myo-inositol biosynthesis pathway that catalyzes the conversion of glucose 6-phosphate to 1-myo-inositol 1-phosphate in a NAD-dependent manner. This Nicotiana paniculata protein is Inositol-3-phosphate synthase (INPS1).